The chain runs to 383 residues: Geranylgeranyl pyrophosphate synthase esdpD (383 aa).

Residues lysine 88, arginine 91, and histidine 120 each coordinate isopentenyl diphosphate. Mg(2+)-binding residues include aspartate 150 and aspartate 154. Arginine 159 contributes to the dimethylallyl diphosphate binding site. Residue arginine 160 coordinates isopentenyl diphosphate. Lysine 237, threonine 238, and glutamine 271 together coordinate dimethylallyl diphosphate. Residue aspartate 274 participates in Mg(2+) binding. Dimethylallyl diphosphate-binding residues include asparagine 278, lysine 288, and lysine 298.

The protein belongs to the FPP/GGPP synthase family. Requires Mg(2+) as cofactor.

The enzyme catalyses isopentenyl diphosphate + dimethylallyl diphosphate = (2E)-geranyl diphosphate + diphosphate. The catalysed reaction is isopentenyl diphosphate + (2E)-geranyl diphosphate = (2E,6E)-farnesyl diphosphate + diphosphate. It carries out the reaction isopentenyl diphosphate + (2E,6E)-farnesyl diphosphate = (2E,6E,10E)-geranylgeranyl diphosphate + diphosphate. It functions in the pathway secondary metabolite biosynthesis; terpenoid biosynthesis. Geranylgeranyl pyrophosphate synthase; part of the cluster that mediates the biosynthesis of shearones, diterpenoid pyrones (DPs) which are structurally diverse meroterpenoids consisting of a diterpene linked by a pyrone, and which may exhibit a range of bioactivities. Within the pathway, esdpD takes part to the biosynthesis of the molecular scaffold by providing geranylgeranyl pyrophosphate (GGPP) to the prenyltransferase esdpC for C-3 geranylgeranylation of the alpha-pyrone. The molecular scaffold is commonly biosynthesized by a series of enzymes including the non-reducing polyketide synthase (NR-PKS) esdpA that generates an alpha-pyrone; the prenyltransferase esdpC that attaches a geranylgeranyl pyrophosphate (GGPP) produced by the GGPP synthase (GGPPS) esdpD onto the pyrone unit; the FAD-dependent monooxygenase esdpE that converts an olefin on the diterpene unit into an epoxide; and the terpene cyclase esdpB that catalyzes the cyclization reactions to give the molecular backbone shearone A. In the modification steps, esdpF oxidizes the hydroxy group to a ketone at C-3 and esdpG then attaches hydroxy groups at both C-11 and C-12. After that, esdpI hydroxylates at C-20 and esdpH hydroxylates at C-6'. The ether bridge is generated by nucleophilic attack of the hydroxy group at C-20 to the carbonyl carbon at C-3. EsdpH can also functions prior to esdpI. The different combinations of these modification enzymes lead to the production of diverse shearone derivatives, shearone I being the end product of the pathway. The alpha-ketoglutarate-dependent dioxygenase esdpJ seems not to be involved in this pathway. The chain is Geranylgeranyl pyrophosphate synthase esdpD from Penicillium shearii (Eupenicillium shearii).